The sequence spans 120 residues: Large ribosomal subunit protein uL22 (120 aa).

This sequence belongs to the universal ribosomal protein uL22 family. Part of the 50S ribosomal subunit.

This protein binds specifically to 23S rRNA; its binding is stimulated by other ribosomal proteins, e.g. L4, L17, and L20. It is important during the early stages of 50S assembly. It makes multiple contacts with different domains of the 23S rRNA in the assembled 50S subunit and ribosome. Its function is as follows. The globular domain of the protein is located near the polypeptide exit tunnel on the outside of the subunit, while an extended beta-hairpin is found that lines the wall of the exit tunnel in the center of the 70S ribosome. This Rippkaea orientalis (strain PCC 8801 / RF-1) (Cyanothece sp. (strain PCC 8801)) protein is Large ribosomal subunit protein uL22.